The primary structure comprises 472 residues: MAGVEEADKLKQLGNAAFSERKWHLAIDMYTKAIELTKTPTLFCNRALAELRAELPGAALADADAALGIEPTFAKAYYHKASAYLSLGKHKQALTNYKKVVDLAPQNSDAQAKVEFCKKEIRRINFENAIMTPDEAPLSQTIKLGSVRADYDGPRIENETVTVEFVEAMKEHFRLEKLIDRHDVIFILLEVQKILKKCPNFVSINVPVGEEITVCGDTHGQYYDLLNIFKLNGNPLETNRYLFNGDFVDRGSYSFENIMTLFAYKVLYPDHFFLSRGNHEGVSMNRMYGFEGEVTQKYNSEMFRLFTEVFNSLPIGHIINNEVFVVHGGLYSSDKVTLDDLQHPNRFRDIPESGLICESLWSDPQPMPGRAPSKRGVSCLSFGPDVTETFLNNNNLKLLVRSHEVKDEGYEIEHGGKCITVFSAPNYCDQMGNKGAFIRFTGGDMKPRFTTFTHVPHPGKRPMHYATGFGLF.

3 TPR repeats span residues Ala-7–Pro-40, Thr-41–Phe-73, and Ala-74–Asn-107. 4 residues coordinate Mn(2+): Asp-217, His-219, Asp-246, and Asn-278. Residue His-279 is the Proton donor/acceptor of the active site. The Mn(2+) site is built by His-327 and His-403.

This sequence belongs to the PPP phosphatase family. PP-5 (PP-T) subfamily. The cofactor is Mg(2+). Requires Mn(2+) as cofactor.

The protein resides in the cytoplasm. The protein localises to the cytosol. Its subcellular location is the nucleus. It carries out the reaction O-phospho-L-seryl-[protein] + H2O = L-seryl-[protein] + phosphate. The enzyme catalyses O-phospho-L-threonyl-[protein] + H2O = L-threonyl-[protein] + phosphate. With respect to regulation, activated by arachidonic acid. Functionally, may function as a protein phosphatase. The sequence is that of Serine/threonine-protein phosphatase T from Trypanosoma brucei brucei (strain 927/4 GUTat10.1).